The sequence spans 277 residues: Probable CCR4-associated factor 1 homolog 10 (277 aa).

Residues Asp40, Glu42, Asp166, and Asp235 each coordinate a divalent metal cation.

Belongs to the CAF1 family. As to quaternary structure, component of the CCR4-NOT complex, at least composed of CRR4 and CAF1 proteins. The cofactor is a divalent metal cation.

The protein resides in the nucleus. The protein localises to the cytoplasm. It carries out the reaction Exonucleolytic cleavage of poly(A) to 5'-AMP.. Its function is as follows. Ubiquitous transcription factor required for a diverse set of processes. It is a component of the CCR4 complex involved in the control of gene expression. This chain is Probable CCR4-associated factor 1 homolog 10 (CAF1-10), found in Arabidopsis thaliana (Mouse-ear cress).